A 180-amino-acid chain; its full sequence is MAALLMPRRNKGMRTRLGCLSHKSDSCSDFTAILPDKPNRALKRLSTEEATRWADSFDVLLSHKYGVAAFRAFLKTEFSEENLEFWLACEEFKKTRSTAKLVSKAHRIFEEFVDVQAPREVNIDFQTREATRKNLQEPSLTCFDQAQGKVHSLMEKDSYPRFLRSKMYLDLLSQSQRRLS.

Position 26 is a phosphoserine (Ser26). The 116-residue stretch at Ser56–Leu171 folds into the RGS domain.

As to quaternary structure, interacts with GNAO1. Interacts with GNAI3.

The protein resides in the cell membrane. It localises to the membrane. Its subcellular location is the perikaryon. It is found in the cell projection. The protein localises to the dendrite. The protein resides in the nucleus. In terms of biological role, regulates G protein-coupled receptor signaling cascades, including signaling via muscarinic acetylcholine receptor CHRM2 and dopamine receptor DRD2. Inhibits signal transduction by increasing the GTPase activity of G protein alpha subunits, thereby driving them into their inactive GDP-bound form. Modulates the activity of potassium channels that are activated in response to DRD2 and CHRM2 signaling. The polypeptide is Regulator of G-protein signaling 8 (RGS8) (Homo sapiens (Human)).